The sequence spans 77 residues: Conotoxin VnMKLT1-012 (77 aa).

The N-terminal stretch at 1-22 (MKLTCMMIVAVLFLTAWTFVTA) is a signal peptide. A propeptide spanning residues 23–48 (DDSRNGLDYLFPKARHEMNPKASRDI) is cleaved from the precursor. Disulfide bonds link Cys-51–Cys-68, Cys-58–Cys-72, and Cys-67–Cys-76.

Belongs to the conotoxin O1 superfamily. Expressed by the venom duct.

The protein resides in the secreted. The sequence is that of Conotoxin VnMKLT1-012 from Conus ventricosus (Mediterranean cone).